Reading from the N-terminus, the 341-residue chain is LIM and senescent cell antigen-like-containing domain protein 2 (341 aa).

5 LIM zinc-binding domains span residues 13 to 74 (AVCQ…LFAP), 76 to 133 (CGSC…EKAK), 138 to 195 (YICQ…KMGV), 196 to 255 (PICG…LFGD), and 256 to 315 (VCYN…FPLE). F22 is modified (phosphoserine). At T327 the chain carries Phosphothreonine. Position 328 is a phosphoserine (S328).

In terms of assembly, interacts with TGFB1I1. Interacts with integrin-linked protein kinase 1 (ILK) via the first LIM domain, and in competition with LIMS1. Part of the heterotrimeric IPP complex composed of integrin-linked kinase (ILK), LIMS1 or LIMS2, and PARVA.

Its subcellular location is the nucleus. It localises to the cell junction. It is found in the focal adhesion. The protein resides in the cell membrane. In terms of biological role, adapter protein in a cytoplasmic complex linking beta-integrins to the actin cytoskeleton, bridges the complex to cell surface receptor tyrosine kinases and growth factor receptors. Plays a role in modulating cell spreading and migration. The polypeptide is LIM and senescent cell antigen-like-containing domain protein 2 (LIMS2) (Homo sapiens (Human)).